Here is a 324-residue protein sequence, read N- to C-terminus: tRNA dimethylallyltransferase (324 aa).

17 to 24 (GPTASGKT) is a binding site for ATP. Residue 19-24 (TASGKT) participates in substrate binding. Interaction with substrate tRNA stretches follow at residues 42-45 (DSAL), 166-170 (QRIQR), 251-256 (RCVGYR), and 284-291 (KRQITWLR).

It belongs to the IPP transferase family. As to quaternary structure, monomer. It depends on Mg(2+) as a cofactor.

The catalysed reaction is adenosine(37) in tRNA + dimethylallyl diphosphate = N(6)-dimethylallyladenosine(37) in tRNA + diphosphate. In terms of biological role, catalyzes the transfer of a dimethylallyl group onto the adenine at position 37 in tRNAs that read codons beginning with uridine, leading to the formation of N6-(dimethylallyl)adenosine (i(6)A). This Burkholderia vietnamiensis (strain G4 / LMG 22486) (Burkholderia cepacia (strain R1808)) protein is tRNA dimethylallyltransferase.